We begin with the raw amino-acid sequence, 89 residues long: Cell division topological specificity factor (89 aa).

The protein belongs to the MinE family.

In terms of biological role, prevents the cell division inhibition by proteins MinC and MinD at internal division sites while permitting inhibition at polar sites. This ensures cell division at the proper site by restricting the formation of a division septum at the midpoint of the long axis of the cell. This is Cell division topological specificity factor from Serratia proteamaculans (strain 568).